A 448-amino-acid polypeptide reads, in one-letter code: Methylenetetrahydrofolate--tRNA-(uracil-5-)-methyltransferase TrmFO (448 aa).

FAD is bound at residue Gly-13 to Gly-18.

The protein belongs to the MnmG family. TrmFO subfamily. Requires FAD as cofactor.

Its subcellular location is the cytoplasm. It carries out the reaction uridine(54) in tRNA + (6R)-5,10-methylene-5,6,7,8-tetrahydrofolate + NADH + H(+) = 5-methyluridine(54) in tRNA + (6S)-5,6,7,8-tetrahydrofolate + NAD(+). The catalysed reaction is uridine(54) in tRNA + (6R)-5,10-methylene-5,6,7,8-tetrahydrofolate + NADPH + H(+) = 5-methyluridine(54) in tRNA + (6S)-5,6,7,8-tetrahydrofolate + NADP(+). Catalyzes the folate-dependent formation of 5-methyl-uridine at position 54 (M-5-U54) in all tRNAs. The sequence is that of Methylenetetrahydrofolate--tRNA-(uracil-5-)-methyltransferase TrmFO from Streptococcus pyogenes serotype M1.